The following is a 504-amino-acid chain: MKNKVQLITYADRLGDGTIKSMTDILRTRFDGVYDGVHILPFFTPFDGADAGFDPIDHTKVDERLGSWDDVAELSKTHNIMVDAIVNHMSWESKQFQDVLAKGEESEYYPMFLTMSSVFPNGATEEDLAGIYRPRPGLPFTHYKFAGKTRLVWVSFTPQQVDIDTDSDKGWEYLMSIFDQMAASHVSYIRLDAVGYGAKEAGTSCFMTPKTFKLISRLREEGVKRGLEILIEVHSYYKKQVEIASKVDRVYDFALPPLLLHALSTGHVEPVAHWTDIRPNNAVTVLDTHDGIGVIDIGSDQLDRSLKGLVPDEDVDNLVNTIHANTHGESQAATGAAASNLDLYQVNSTYYSALGCNDQHYIAARAVQFFLPGVPQVYYVGALAGKNDMELLRKTNNGRDINRHYYSTAEIDENLKRPVVKALNALAKFRNELDAFDGTFSYTTDDDTSISFTWRGETSQATLTFEPKRGLGVDNTTPVAMLEWEDSAGDHRSDDLIANPPVVA.

Aspartate 50 is a binding site for substrate. Sucrose-binding positions include histidine 88, 190–192 (RLD), glutamate 232, 289–290 (HD), 342–345 (DLYQ), and arginine 399. Aspartate 192 functions as the Nucleophile in the catalytic mechanism. The Proton donor role is filled by glutamate 232.

Belongs to the glycosyl hydrolase 13 family. Sucrose phosphorylase subfamily. As to quaternary structure, homodimer.

The enzyme catalyses sucrose + phosphate = D-fructose + alpha-D-glucose 1-phosphate. Its function is as follows. Catalyzes the reversible phosphorolysis of sucrose into alpha-D-glucose 1-phosphate (Glc1P) and D-fructose. Is involved in sucrose degradation. Also displays transglucosylation activity in vitro, by transferring the glucosyl moiety of Glc1P to a broad range of monomeric sugars, such as D- and L-arabinose, D- and L-arabitol, and xylitol. The sequence is that of Sucrose phosphorylase from Bifidobacterium adolescentis (strain ATCC 15703 / DSM 20083 / NCTC 11814 / E194a).